Reading from the N-terminus, the 388-residue chain is Chorismate synthase (388 aa).

NADP(+) is bound by residues R39 and R45. Residues 130 to 132 (RSS), 251 to 252 (NA), G296, 311 to 315 (KPIPT), and R337 contribute to the FMN site.

It belongs to the chorismate synthase family. As to quaternary structure, homotetramer. FMNH2 is required as a cofactor.

The enzyme catalyses 5-O-(1-carboxyvinyl)-3-phosphoshikimate = chorismate + phosphate. It functions in the pathway metabolic intermediate biosynthesis; chorismate biosynthesis; chorismate from D-erythrose 4-phosphate and phosphoenolpyruvate: step 7/7. Catalyzes the anti-1,4-elimination of the C-3 phosphate and the C-6 proR hydrogen from 5-enolpyruvylshikimate-3-phosphate (EPSP) to yield chorismate, which is the branch point compound that serves as the starting substrate for the three terminal pathways of aromatic amino acid biosynthesis. This reaction introduces a second double bond into the aromatic ring system. The chain is Chorismate synthase from Streptococcus thermophilus (strain CNRZ 1066).